Consider the following 312-residue polypeptide: Lipoyl synthase (312 aa).

The [4Fe-4S] cluster site is built by C37, C42, C48, C67, C71, C74, and S281. Residues 52–270 (RDGPGTATFM…AVAEREFDFL (219 aa)) form the Radical SAM core domain.

It belongs to the radical SAM superfamily. Lipoyl synthase family. It depends on [4Fe-4S] cluster as a cofactor.

The protein localises to the cytoplasm. It catalyses the reaction [[Fe-S] cluster scaffold protein carrying a second [4Fe-4S](2+) cluster] + N(6)-octanoyl-L-lysyl-[protein] + 2 oxidized [2Fe-2S]-[ferredoxin] + 2 S-adenosyl-L-methionine + 4 H(+) = [[Fe-S] cluster scaffold protein] + N(6)-[(R)-dihydrolipoyl]-L-lysyl-[protein] + 4 Fe(3+) + 2 hydrogen sulfide + 2 5'-deoxyadenosine + 2 L-methionine + 2 reduced [2Fe-2S]-[ferredoxin]. It functions in the pathway protein modification; protein lipoylation via endogenous pathway; protein N(6)-(lipoyl)lysine from octanoyl-[acyl-carrier-protein]: step 2/2. Its function is as follows. Catalyzes the radical-mediated insertion of two sulfur atoms into the C-6 and C-8 positions of the octanoyl moiety bound to the lipoyl domains of lipoate-dependent enzymes, thereby converting the octanoylated domains into lipoylated derivatives. The protein is Lipoyl synthase of Halorubrum lacusprofundi (strain ATCC 49239 / DSM 5036 / JCM 8891 / ACAM 34).